We begin with the raw amino-acid sequence, 580 residues long: NADH-quinone oxidoreductase subunit C/D (580 aa).

The NADH dehydrogenase I subunit C stretch occupies residues M1–F171. The segment at E195–R580 is NADH dehydrogenase I subunit D.

The protein in the N-terminal section; belongs to the complex I 30 kDa subunit family. This sequence in the C-terminal section; belongs to the complex I 49 kDa subunit family. In terms of assembly, NDH-1 is composed of 13 different subunits. Subunits NuoB, CD, E, F, and G constitute the peripheral sector of the complex.

It localises to the cell inner membrane. The catalysed reaction is a quinone + NADH + 5 H(+)(in) = a quinol + NAD(+) + 4 H(+)(out). NDH-1 shuttles electrons from NADH, via FMN and iron-sulfur (Fe-S) centers, to quinones in the respiratory chain. The immediate electron acceptor for the enzyme in this species is believed to be ubiquinone. Couples the redox reaction to proton translocation (for every two electrons transferred, four hydrogen ions are translocated across the cytoplasmic membrane), and thus conserves the redox energy in a proton gradient. The chain is NADH-quinone oxidoreductase subunit C/D from Cereibacter sphaeroides (strain ATCC 17025 / ATH 2.4.3) (Rhodobacter sphaeroides).